The primary structure comprises 183 residues: Peptidyl-tRNA hydrolase (183 aa).

TRNA is bound at residue Y14. H19 acts as the Proton acceptor in catalysis. 3 residues coordinate tRNA: Y64, N66, and N112.

Belongs to the PTH family. As to quaternary structure, monomer.

It is found in the cytoplasm. The catalysed reaction is an N-acyl-L-alpha-aminoacyl-tRNA + H2O = an N-acyl-L-amino acid + a tRNA + H(+). In terms of biological role, hydrolyzes ribosome-free peptidyl-tRNAs (with 1 or more amino acids incorporated), which drop off the ribosome during protein synthesis, or as a result of ribosome stalling. Its function is as follows. Catalyzes the release of premature peptidyl moieties from peptidyl-tRNA molecules trapped in stalled 50S ribosomal subunits, and thus maintains levels of free tRNAs and 50S ribosomes. The polypeptide is Peptidyl-tRNA hydrolase (Anaplasma phagocytophilum (strain HZ)).